Here is a 445-residue protein sequence, read N- to C-terminus: tRNA-2-methylthio-N(6)-dimethylallyladenosine synthase (445 aa).

Residues 7 to 121 (KTFYIETFGC…LPEMLVQLEA (115 aa)) enclose the MTTase N-terminal domain. The [4Fe-4S] cluster site is built by cysteine 16, cysteine 52, cysteine 84, cysteine 158, cysteine 162, and cysteine 165. One can recognise a Radical SAM core domain in the interval 144 to 374 (RDNPHRAYLT…QEKQRAIQIR (231 aa)). The 67-residue stretch at 377–443 (AEMIGSIQEV…PNSLVGESAA (67 aa)) folds into the TRAM domain.

This sequence belongs to the methylthiotransferase family. MiaB subfamily. Monomer. [4Fe-4S] cluster serves as cofactor.

It localises to the cytoplasm. It carries out the reaction N(6)-dimethylallyladenosine(37) in tRNA + (sulfur carrier)-SH + AH2 + 2 S-adenosyl-L-methionine = 2-methylsulfanyl-N(6)-dimethylallyladenosine(37) in tRNA + (sulfur carrier)-H + 5'-deoxyadenosine + L-methionine + A + S-adenosyl-L-homocysteine + 2 H(+). In terms of biological role, catalyzes the methylthiolation of N6-(dimethylallyl)adenosine (i(6)A), leading to the formation of 2-methylthio-N6-(dimethylallyl)adenosine (ms(2)i(6)A) at position 37 in tRNAs that read codons beginning with uridine. This chain is tRNA-2-methylthio-N(6)-dimethylallyladenosine synthase, found in Solibacter usitatus (strain Ellin6076).